We begin with the raw amino-acid sequence, 88 residues long: Cell division topological specificity factor (88 aa).

This sequence belongs to the MinE family.

Functionally, prevents the cell division inhibition by proteins MinC and MinD at internal division sites while permitting inhibition at polar sites. This ensures cell division at the proper site by restricting the formation of a division septum at the midpoint of the long axis of the cell. This Shewanella denitrificans (strain OS217 / ATCC BAA-1090 / DSM 15013) protein is Cell division topological specificity factor.